A 240-amino-acid polypeptide reads, in one-letter code: uncharacterized protein (240 aa).

Residues 93–160 (QEASGCTVGE…AGGGAAASGQ (68 aa)) are disordered. 2 stretches are compositionally biased toward low complexity: residues 110–119 (AQPSQPAQGG) and 129–150 (GGAE…PAEN).

This is an uncharacterized protein from Streptomyces viridochromogenes.